Reading from the N-terminus, the 126-residue chain is Large ribosomal subunit protein uL22 (126 aa).

This sequence belongs to the universal ribosomal protein uL22 family. In terms of assembly, part of the 50S ribosomal subunit.

Its function is as follows. This protein binds specifically to 23S rRNA; its binding is stimulated by other ribosomal proteins, e.g. L4, L17, and L20. It is important during the early stages of 50S assembly. It makes multiple contacts with different domains of the 23S rRNA in the assembled 50S subunit and ribosome. In terms of biological role, the globular domain of the protein is located near the polypeptide exit tunnel on the outside of the subunit, while an extended beta-hairpin is found that lines the wall of the exit tunnel in the center of the 70S ribosome. The protein is Large ribosomal subunit protein uL22 of Rhodospirillum rubrum (strain ATCC 11170 / ATH 1.1.1 / DSM 467 / LMG 4362 / NCIMB 8255 / S1).